A 379-amino-acid chain; its full sequence is ATP phosphoribosyltransferase regulatory subunit (379 aa).

This sequence belongs to the class-II aminoacyl-tRNA synthetase family. HisZ subfamily. In terms of assembly, heteromultimer composed of HisG and HisZ subunits.

The protein resides in the cytoplasm. Its pathway is amino-acid biosynthesis; L-histidine biosynthesis; L-histidine from 5-phospho-alpha-D-ribose 1-diphosphate: step 1/9. Functionally, required for the first step of histidine biosynthesis. May allow the feedback regulation of ATP phosphoribosyltransferase activity by histidine. The protein is ATP phosphoribosyltransferase regulatory subunit of Caldanaerobacter subterraneus subsp. tengcongensis (strain DSM 15242 / JCM 11007 / NBRC 100824 / MB4) (Thermoanaerobacter tengcongensis).